The following is a 202-amino-acid chain: MGTRWFAKNTTMSKNSIVIGVDLDGVCADFYGRMRQIASEWFERPIDELPEEVSWGLSEWGITNPSQYDSLHRFAVTQRELFSSMEAIPGARKYLRQLSDEGFRIRIITHRLFIHYFHATAVQQTVNWLDSHGIPYWDLCFVKEKTQVGADIYIEDSPENVAQLRGRGLFTICFGNSTNRHIEELRAASWQDVYDMIKAFVT.

D22 serves as the catalytic Nucleophile. 3 residues coordinate Mg(2+): D22, D24, and D156. Catalysis depends on D24, which acts as the Proton donor.

The protein belongs to the 5'(3')-deoxyribonucleotidase family. Mg(2+) serves as cofactor.

Its function is as follows. Dephosphorylates the 5' and 2'(3')-phosphates of deoxyribonucleotides. In Chlorobaculum tepidum (strain ATCC 49652 / DSM 12025 / NBRC 103806 / TLS) (Chlorobium tepidum), this protein is Putative 5'(3')-deoxyribonucleotidase.